Here is a 127-residue protein sequence, read N- to C-terminus: Large ribosomal subunit protein bL12c (127 aa).

The tract at residues 104–127 (GVAKDAAEEAKKQIEDAGGKASLK) is disordered. Basic and acidic residues predominate over residues 105-121 (VAKDAAEEAKKQIEDAG).

It belongs to the bacterial ribosomal protein bL12 family. Homodimer. Part of the ribosomal stalk of the 50S ribosomal subunit. Forms a multimeric L10(L12)X complex, where L10 forms an elongated spine to which 2 to 4 L12 dimers bind in a sequential fashion. Binds GTP-bound translation factors.

Its subcellular location is the plastid. It localises to the chloroplast. In terms of biological role, forms part of the ribosomal stalk which helps the ribosome interact with GTP-bound translation factors. Is thus essential for accurate translation. The protein is Large ribosomal subunit protein bL12c of Trieres chinensis (Marine centric diatom).